The primary structure comprises 310 residues: Zinc finger protein unc-98 (310 aa).

Polar residues predominate over residues 73–84 (GSSSAQTPTKSS). The interval 73 to 102 (GSSSAQTPTKSSGGALDGSDQQEVRQDGTS) is disordered. 2 consecutive C2H2-type zinc fingers follow at residues 113–135 (YKCR…ERIH) and 141–163 (YVCG…AAQH). Residues 169–188 (YKCECGRTFFSYTEMLYHKH) form a C2H2-type 3; degenerate zinc finger. Residues 198–310 (APETTTIKVS…RTSGYVTPRF (113 aa)) are interaction with myo-3. The C2H2-type 4 zinc-finger motif lies at 246–268 (YICEYCSKSYSDSRGLAYHMYSH).

As to quaternary structure, interacts with hum-6, mep-1, myo-3, unc-96 and unc-97/PINCH. Expressed in embryos from 1.5- to 2-fold stage in myofibrils. In larvae and adults, it is expressed in body wall muscle, and in addition, anal depressor muscle and vulval muscles. More specifically it is found in the thick filaments of muscle fibers.

The protein resides in the nucleus. It localises to the cytoplasm. In terms of biological role, probable transcription factor required for muscle structure. Its dual subcellular localization suggests that it may function both as a muscle adhesion complex protein and as a transcription factor, or work together with transcription factors, to influence gene expression. Thought to act as a molecular bridge between unc-97 and myo-3 at the M-line of muscles, possibly in a signaling role. Plays a role in the formation of muscle connections, also called muscle arm extensions, between the body wall and the motor axons in the dorsal and ventral cord. In Caenorhabditis elegans, this protein is Zinc finger protein unc-98 (unc-98).